Here is a 45-residue protein sequence, read N- to C-terminus: Cytochrome b559 subunit beta (45 aa).

A helical membrane pass occupies residues 20 to 36 (WLALHTLGVPTVFFLGA). H24 contributes to the heme binding site.

Belongs to the PsbE/PsbF family. In terms of assembly, heterodimer of an alpha subunit and a beta subunit. PSII is composed of 1 copy each of membrane proteins PsbA, PsbB, PsbC, PsbD, PsbE, PsbF, PsbH, PsbI, PsbJ, PsbK, PsbL, PsbM, PsbT, PsbX, PsbY, PsbZ, Psb30/Ycf12, peripheral proteins PsbO, CyanoQ (PsbQ), PsbU, PsbV and a large number of cofactors. It forms dimeric complexes. Heme b is required as a cofactor.

The protein resides in the cellular thylakoid membrane. This b-type cytochrome is tightly associated with the reaction center of photosystem II (PSII). PSII is a light-driven water:plastoquinone oxidoreductase that uses light energy to abstract electrons from H(2)O, generating O(2) and a proton gradient subsequently used for ATP formation. It consists of a core antenna complex that captures photons, and an electron transfer chain that converts photonic excitation into a charge separation. This is Cytochrome b559 subunit beta from Parasynechococcus marenigrum (strain WH8102).